Consider the following 376-residue polypeptide: UPF0754 membrane protein Sca_1420 (376 aa).

A run of 2 helical transmembrane segments spans residues 4–24 (FLVI…TNII) and 356–376 (LLGF…ALFV).

It belongs to the UPF0754 family.

It is found in the cell membrane. This is UPF0754 membrane protein Sca_1420 from Staphylococcus carnosus (strain TM300).